A 417-amino-acid chain; its full sequence is Pre-mRNA-splicing factor PRP46 (417 aa).

7 WD repeats span residues 119-159 (AHQG…LKAT), 162-201 (GHIMGVRSLAVSSRYPYLFSGSEDKTVKCWDLERTNSSSG), 209-248 (GHVGGIYAMALHPELDLLFTGGRDSVIRVWDLRSRTEIMV), 251-290 (GHRSDITSIASQIGDPQIITSSMDATIRLWDIRKATTQLA), 293-334 (HHSK…NEFG), 337-376 (GENKIINTLSINPSNNTLFSGYDDGRMEFYDYVSGDLLQS), and 385-417 (STESAIYASTFDMSGLRLITCEGDKSIKIWGEE).

It belongs to the WD repeat PRL1/PRL2 family. Associated with the spliceosome.

The protein resides in the cytoplasm. It localises to the nucleus. Functionally, involved in pre-mRNA splicing and required for cell cycle progression at G2/M. The protein is Pre-mRNA-splicing factor PRP46 (PRP46) of Debaryomyces hansenii (strain ATCC 36239 / CBS 767 / BCRC 21394 / JCM 1990 / NBRC 0083 / IGC 2968) (Yeast).